A 485-amino-acid polypeptide reads, in one-letter code: Endo-1,4-beta-xylanase C (485 aa).

Residues 1–19 (MKFLQIIPVLLSLTSTTLA) form the signal peptide. One can recognise a GH11 domain in the interval 34 to 234 (KETGNKVGTI…GNGGVSGTAD (201 aa)). Asn-56 and Asn-107 each carry an N-linked (GlcNAc...) asparagine glycan. Residue Glu-128 is the Nucleophile of the active site. Residue Asn-175 is glycosylated (N-linked (GlcNAc...) asparagine). Glu-221 acts as the Proton donor in catalysis. Positions 250 to 450 (ASPAPAGGAP…PQNASDGGNC (201 aa)) are disordered. 2 stretches are compositionally biased toward low complexity: residues 265–330 (AGND…QGQH) and 344–354 (GSDFNNWSQGG). 7 repeat units span residues 275 to 280 (GQQPPQ), 281 to 286 (GQQPPQ), 287 to 292 (GQQPPQ), 293 to 298 (GQQPPQ), 299 to 304 (GQQPPQ), 310 to 315 (GQQPPQ), and 316 to 321 (GQQPPQ). Residues 275 to 321 (GQQPPQGQQPPQGQQPPQGQQPPQGQQPPQGNDQQGQQPPQGQQPPQ) are 7 X 6 AA tandem repeats of G-Q-Q-P-P-Q. Asn-349 is a glycosylation site (N-linked (GlcNAc...) asparagine). 8 tandem repeats follow at residues 353–361 (GGSPWGGNQ), 362–370 (GGSPWGGNQ), 371–379 (GGNPWGGNQ), 380–388 (GGSPWGGNQ), 389–397 (GGSPWGQGN), 399–407 (GGNPWGGNQ), 408–416 (GGSPWGGNQ), and 417–425 (GGNPWGGNQ). The segment at 353–425 (GGSPWGGNQG…QGGNPWGGNQ (73 aa)) is 8 X 9 AA tandem repeats of G-G-[SN]-P-W-G-G-N-Q. The span at 355 to 425 (SPWGGNQGGS…QGGNPWGGNQ (71 aa)) shows a compositional bias: gly residues. Low complexity predominate over residues 426-445 (WGAPQNAAAPQSAAAPQNAS). Asn-443 carries N-linked (GlcNAc...) asparagine glycosylation. A CBM1 domain is found at 449–484 (NCASLWGQCGGQGYNGPSCCSEGSCKPINEYFHQCQ).

It belongs to the glycosyl hydrolase 11 (cellulase G) family.

It is found in the secreted. The catalysed reaction is Endohydrolysis of (1-&gt;4)-beta-D-xylosidic linkages in xylans.. Its pathway is glycan degradation; xylan degradation. Functionally, endo-1,4-beta-xylanase involved in the hydrolysis of xylan, a major structural heterogeneous polysaccharide found in plant biomass representing the second most abundant polysaccharide in the biosphere, after cellulose. The protein is Endo-1,4-beta-xylanase C (xynC) of Neocallimastix patriciarum (Rumen fungus).